Consider the following 236-residue polypeptide: Auxin-responsive protein IAA16 (236 aa).

An EAR-like (transcriptional repression) motif is present at residues 9-13 (LRLGL). Positions 82-110 (KNVMSGQKPTTGDATEGNDKTSGSSGATS) are disordered. The segment covering 85-94 (MSGQKPTTGD) has biased composition (polar residues). Residues 118 to 218 (VAYVKVSMDG…SCKRIRIMKG (101 aa)) enclose the PB1 domain.

It belongs to the Aux/IAA family. In terms of assembly, homodimers and heterodimers.

The protein resides in the nucleus. In terms of biological role, aux/IAA proteins are short-lived transcriptional factors that function as repressors of early auxin response genes at low auxin concentrations. Repression is thought to result from the interaction with auxin response factors (ARFs), proteins that bind to the auxin-responsive promoter element (AuxRE). Formation of heterodimers with ARF proteins may alter their ability to modulate early auxin response genes expression. This is Auxin-responsive protein IAA16 (IAA16) from Arabidopsis thaliana (Mouse-ear cress).